We begin with the raw amino-acid sequence, 433 residues long: Urokinase-type plasminogen activator (433 aa).

The N-terminal stretch at 1–20 is a signal peptide; the sequence is MRVLLACLLVCALVVSDSDG. In terms of domain architecture, EGF-like spans 29 to 65; that stretch reads GESNCGCLNGGKCVTYKYFSNIQRCSCPKKFQGEHCE. 6 cysteine pairs are disulfide-bonded: cysteine 33–cysteine 41, cysteine 35–cysteine 53, cysteine 55–cysteine 64, cysteine 72–cysteine 153, cysteine 93–cysteine 135, and cysteine 124–cysteine 148. The interval 36–59 is binds urokinase plasminogen activator surface receptor; sequence LNGGKCVTYKYFSNIQRCSCPKKF. In terms of domain architecture, Kringle spans 72-153; that stretch reads CYQGNGHSYR…FVQFCMVQDC (82 aa). The connecting peptide stretch occupies residues 154-180; sequence SVGKSPSSPREKEEFQCGQKALRPRFK. Serine 160 is subject to Phosphoserine. 6 disulfides stabilise this stretch: cysteine 170/cysteine 301, cysteine 211/cysteine 227, cysteine 219/cysteine 290, cysteine 315/cysteine 384, cysteine 347/cysteine 363, and cysteine 374/cysteine 402. The 246-residue stretch at 181 to 426 folds into the Peptidase S1 domain; that stretch reads IVGGQVTNAE…FLPWINTHTR (246 aa). Residues histidine 226 and aspartate 277 each act as charge relay system in the active site. The active-site Charge relay system is the serine 378.

The protein belongs to the peptidase S1 family. As to quaternary structure, found in high and low molecular mass forms. Each consists of two chains, A and B. The high molecular mass form contains a long chain A which is cleaved to yield a short chain A. Forms heterodimer with SERPINA5. Binds LRP1B; binding is followed by internalization and degradation. Interacts with MRC2. Interacts with PLAUR. In complex with SERPINE1, interacts with PLAUR/uPAR. Interacts with SORL1 and LRP1, either alone or in complex with SERPINE1; these interactions are abolished in the presence of LRPAP1/RAP. The ternary complex composed of PLAUR-PLAU-PAI1 also interacts with SORLA. Produced as an inactive single-chain protein (pro-uPA or sc-uPA), is processed into the active disulfide-linked two-chain form of PLAU/uPA by a proteolytic event mediated, at least, by TMPRSS4.

The protein resides in the secreted. It catalyses the reaction Specific cleavage of Arg-|-Val bond in plasminogen to form plasmin.. Its activity is regulated as follows. Inhibited by SERPINA5. Inhibited by SERPINE1. Functionally, specifically cleaves the zymogen plasminogen to form the active enzyme plasmin. The chain is Urokinase-type plasminogen activator (PLAU) from Bos taurus (Bovine).